Here is a 561-residue protein sequence, read N- to C-terminus: Arginine--tRNA ligase (561 aa).

Positions 129 to 139 match the 'HIGH' region motif; the sequence is ANPTGPLHVGH.

Belongs to the class-I aminoacyl-tRNA synthetase family. In terms of assembly, monomer.

It localises to the cytoplasm. It carries out the reaction tRNA(Arg) + L-arginine + ATP = L-arginyl-tRNA(Arg) + AMP + diphosphate. The polypeptide is Arginine--tRNA ligase (Bordetella petrii (strain ATCC BAA-461 / DSM 12804 / CCUG 43448)).